The sequence spans 100 residues: Omega toxin Ap2 (100 aa).

A signal peptide spans Met1–Ala22. A propeptide spanning residues Asp23–Arg57 is cleaved from the precursor. 3 disulfides stabilise this stretch: Cys58/Cys74, Cys65/Cys79, and Cys73/Cys94. At Ser99 the chain carries Serine amide.

Belongs to the neurotoxin 14 (magi-1) family. 08 (Ltx-4) subfamily. In terms of tissue distribution, expressed by the venom duct.

It is found in the secreted. Its function is as follows. Inhibits 31.17% of Cav2.1/CACNA1A current at 1 uM concentration. The chain is Omega toxin Ap2 from Acanthoscurria paulensis (Brazilian giant black tarantula spider).